The sequence spans 403 residues: Coenzyme A biosynthesis bifunctional protein CoaBC (403 aa).

Residues 1–197 (MLHHVKLIYA…LHPKSLEGKR (197 aa)) are phosphopantothenoylcysteine decarboxylase. The interval 198 to 403 (VLVTAGATRE…RLWDEIEKML (206 aa)) is phosphopantothenate--cysteine ligase. CTP-binding residues include D287, K297, and F330.

It in the N-terminal section; belongs to the HFCD (homo-oligomeric flavin containing Cys decarboxylase) superfamily. This sequence in the C-terminal section; belongs to the PPC synthetase family. Mg(2+) serves as cofactor. Requires FMN as cofactor.

It catalyses the reaction N-[(R)-4-phosphopantothenoyl]-L-cysteine + H(+) = (R)-4'-phosphopantetheine + CO2. The catalysed reaction is (R)-4'-phosphopantothenate + L-cysteine + CTP = N-[(R)-4-phosphopantothenoyl]-L-cysteine + CMP + diphosphate + H(+). It participates in cofactor biosynthesis; coenzyme A biosynthesis. Its function is as follows. Catalyzes two sequential steps in the biosynthesis of coenzyme A. In the first step cysteine is conjugated to 4'-phosphopantothenate to form 4-phosphopantothenoylcysteine. In the second step the latter compound is decarboxylated to form 4'-phosphopantotheine. In Thermococcus kodakarensis (strain ATCC BAA-918 / JCM 12380 / KOD1) (Pyrococcus kodakaraensis (strain KOD1)), this protein is Coenzyme A biosynthesis bifunctional protein CoaBC.